A 738-amino-acid chain; its full sequence is Adhesion G protein-coupled receptor L4 (738 aa).

The N-terminal stretch at 1–19 (MRLLLLLVGLSTLLNHSYT) is a signal peptide. The EGF-like 1 domain maps to 20 to 56 (QNCKTPCLPNAKCEVLDEVAACFCSTGYTGNGITICE). Residues 20-480 (QNCKTPCLPN…DYNILTRITQ (461 aa)) are Extracellular-facing. 9 disulfides stabilise this stretch: cysteine 22–cysteine 32, cysteine 26–cysteine 41, cysteine 43–cysteine 55, cysteine 61–cysteine 73, cysteine 67–cysteine 82, cysteine 84–cysteine 105, cysteine 111–cysteine 123, cysteine 117–cysteine 132, and cysteine 134–cysteine 155. An EGF-like 2; calcium-binding domain is found at 57 to 106 (DVDECNETSVCGDHAVCENTNGGFSCFCVEGYQTSTGKTQFTPNDGSYCQ). Residue asparagine 62 is glycosylated (N-linked (GlcNAc...) asparagine). An EGF-like 3; calcium-binding domain is found at 107-156 (DVDECNETSVCGDHAVCENTNGGFSCFCVEGYQTSTGKTQFTPNDGSYCQ). Residue asparagine 112 is glycosylated (N-linked (GlcNAc...) asparagine). 6 N-linked (GlcNAc...) asparagine glycosylation sites follow: asparagine 175, asparagine 226, asparagine 297, asparagine 421, asparagine 429, and asparagine 443. The GAIN-B domain occupies 292–467 (TQFDMNSTDL…AILMSPSTSI (176 aa)). 2 disulfides stabilise this stretch: cysteine 417/cysteine 449 and cysteine 437/cysteine 451. The tract at residues 417-467 (CAFWNYSVDDMNNGSWSSEGCELTYSNDTHTSCRCSHLTHFAILMSPSTSI) is GPS. Residues 481–501 (LGIIISLICLAICIFTFWFFS) form a helical membrane-spanning segment. The Cytoplasmic segment spans residues 502-522 (EIQSTRTTIHKNLCCSLFLAQ). The chain crosses the membrane as a helical span at residues 523-543 (LVFLVGININTNKLVCSIIAG). The Extracellular segment spans residues 544 to 547 (LLHY). Residues 548–568 (FFLAAFAWMCIEGIYLYLIVV) traverse the membrane as a helical segment. The Cytoplasmic segment spans residues 569–580 (GLIYNKGFLHKN). A helical transmembrane segment spans residues 581 to 601 (FYIFGYLSPAVVVGFSASLGY). At 602–621 (RYYGTTKVCWLSTENNFIWS) the chain is on the extracellular side. Residues 622-642 (FIGPACLIILVNLLAFGVIIY) form a helical membrane-spanning segment. At 643-666 (KVFRHTAGLKPEVSCYENIRSCAR) the chain is on the cytoplasmic side. Residues 667–687 (GALALLFLLGTTWTFGVLHVV) traverse the membrane as a helical segment. Residues 688–694 (HASVVTA) lie on the Extracellular side of the membrane. A helical transmembrane segment spans residues 695–715 (YLFTVSNAFQGMFIFLFLCVL). The Cytoplasmic portion of the chain corresponds to 716 to 738 (SRKIQEEYYRLFKNVPCCFECLR).

Belongs to the G-protein coupled receptor 2 family. Adhesion G-protein coupled receptor (ADGR) subfamily. Heterodimer of 2 chains generated by proteolytic processing; the large extracellular N-terminal fragment and the membrane-bound C-terminal fragment predominantly remain associated and non-covalently linked. In terms of processing, proteolytically cleaved into 2 subunits, an extracellular alpha subunit and a seven-transmembrane subunit. Glycosylated. As to expression, abundantly expressed in heart, lung, and kidney. Less evident expression is observed in brain, skeletal muscle, liver and spleen. No expression is detected in testis.

The protein localises to the cell membrane. Its function is as follows. Endothelial orphan receptor that acts as a key regulator of angiogenesis. This is Adhesion G protein-coupled receptor L4 (Adgrl4) from Rattus norvegicus (Rat).